We begin with the raw amino-acid sequence, 80 residues long: Large ribosomal subunit protein bL31B (80 aa).

Belongs to the bacterial ribosomal protein bL31 family. Type B subfamily. In terms of assembly, part of the 50S ribosomal subunit.

This is Large ribosomal subunit protein bL31B from Streptococcus pneumoniae serotype 2 (strain D39 / NCTC 7466).